We begin with the raw amino-acid sequence, 264 residues long: Spermidine/putrescine transport system permease protein PotC (264 aa).

Residues 1 to 7 (MIGRLLR) are Cytoplasmic-facing. The chain crosses the membrane as a helical span at residues 8 to 27 (GGFMTAIYAYLYIPIIILIV). Topologically, residues 28–65 (NSFNSSRFGINWQGFTTKWYSLLMNNDSLLQAAQHSLT) are periplasmic. The ABC transmembrane type-1 domain maps to 60-248 (AQHSLTMAVF…VLSLVMVIAS (189 aa)). Residues 66–85 (MAVFSATFATLIGSLTAVAL) traverse the membrane as a helical segment. Residues 86-100 (YRYRFRGKPFVSGML) lie on the Cytoplasmic side of the membrane. A helical transmembrane segment spans residues 101–120 (FVVMMSPDIVMAISLLVLFM). The Periplasmic portion of the chain corresponds to 121-128 (LLGIQLGF). A helical transmembrane segment spans residues 129–148 (WSLLFSHITFCLPFVVVTVY). Residues 149-176 (SRLKGFDVRMLEAAKDLGASEFTILRKI) are Cytoplasmic-facing. The helical transmembrane segment at 177-196 (ILPLAMPAVAAGWVLSFTLS) threads the bilayer. Over 197-231 (MDDVVVSSFVTGPSYEILPLKIYSMVKVGVSPEVN) the chain is Periplasmic. Residues 232–251 (ALATILLVLSLVMVIASQLI) traverse the membrane as a helical segment. The Cytoplasmic segment spans residues 252–264 (ARDKTKGNTGDVK).

The protein belongs to the binding-protein-dependent transport system permease family. CysTW subfamily.

It localises to the cell inner membrane. In terms of biological role, required for the activity of the bacterial periplasmic transport system of putrescine and spermidine. This chain is Spermidine/putrescine transport system permease protein PotC (potC), found in Escherichia coli O157:H7.